The primary structure comprises 360 residues: Phospho-N-acetylmuramoyl-pentapeptide-transferase (360 aa).

The next 10 helical transmembrane spans lie at 27 to 47 (GAIATALFFVFFFGPNIIKSL), 72 to 92 (TPTMGGLMILSGLFVSTLLWA), 94 to 114 (LSNHYVWVVLWVMLGYGAIGF), 135 to 155 (LACEAGVALVACIAMMKLGTP), 167 to 187 (GYVVDLGLFFLIFGPFVIVAS), 199 to 219 (GLAIVPVMIAAGTFGIIAYLV), 236 to 256 (AGELAVVSGAVIGAGLGFLWF), 263 to 283 (IFMGDTGSLALGGLLGTIAVA), 289 to 309 (VLAIVGGLFALETLSVIVQVV), and 337 to 357 (QVVVRFWIIAFVLALVGLSTL).

Belongs to the glycosyltransferase 4 family. MraY subfamily. It depends on Mg(2+) as a cofactor.

It is found in the cell inner membrane. The enzyme catalyses UDP-N-acetyl-alpha-D-muramoyl-L-alanyl-gamma-D-glutamyl-meso-2,6-diaminopimeloyl-D-alanyl-D-alanine + di-trans,octa-cis-undecaprenyl phosphate = di-trans,octa-cis-undecaprenyl diphospho-N-acetyl-alpha-D-muramoyl-L-alanyl-D-glutamyl-meso-2,6-diaminopimeloyl-D-alanyl-D-alanine + UMP. It participates in cell wall biogenesis; peptidoglycan biosynthesis. In terms of biological role, catalyzes the initial step of the lipid cycle reactions in the biosynthesis of the cell wall peptidoglycan: transfers peptidoglycan precursor phospho-MurNAc-pentapeptide from UDP-MurNAc-pentapeptide onto the lipid carrier undecaprenyl phosphate, yielding undecaprenyl-pyrophosphoryl-MurNAc-pentapeptide, known as lipid I. In Beijerinckia indica subsp. indica (strain ATCC 9039 / DSM 1715 / NCIMB 8712), this protein is Phospho-N-acetylmuramoyl-pentapeptide-transferase.